The sequence spans 270 residues: Tryptophan synthase alpha chain (270 aa).

Catalysis depends on proton acceptor residues E57 and D68.

This sequence belongs to the TrpA family. In terms of assembly, tetramer of two alpha and two beta chains.

The enzyme catalyses (1S,2R)-1-C-(indol-3-yl)glycerol 3-phosphate + L-serine = D-glyceraldehyde 3-phosphate + L-tryptophan + H2O. It functions in the pathway amino-acid biosynthesis; L-tryptophan biosynthesis; L-tryptophan from chorismate: step 5/5. Its function is as follows. The alpha subunit is responsible for the aldol cleavage of indoleglycerol phosphate to indole and glyceraldehyde 3-phosphate. The chain is Tryptophan synthase alpha chain from Mycobacterium bovis (strain ATCC BAA-935 / AF2122/97).